The following is a 212-amino-acid chain: 3,4-dihydroxy-2-butanone 4-phosphate synthase (212 aa).

D-ribulose 5-phosphate contacts are provided by residues 37–38 (RE), Asp42, 150–154 (RRGHT), and Glu174. Residue Glu38 coordinates Mg(2+). A Mg(2+)-binding site is contributed by His153.

Belongs to the DHBP synthase family. In terms of assembly, homodimer. Mg(2+) serves as cofactor. Mn(2+) is required as a cofactor.

The enzyme catalyses D-ribulose 5-phosphate = (2S)-2-hydroxy-3-oxobutyl phosphate + formate + H(+). Its pathway is cofactor biosynthesis; riboflavin biosynthesis; 2-hydroxy-3-oxobutyl phosphate from D-ribulose 5-phosphate: step 1/1. Its function is as follows. Catalyzes the conversion of D-ribulose 5-phosphate to formate and 3,4-dihydroxy-2-butanone 4-phosphate. The polypeptide is 3,4-dihydroxy-2-butanone 4-phosphate synthase (Histophilus somni (strain 129Pt) (Haemophilus somnus)).